The chain runs to 389 residues: Tryptophan synthase beta chain (389 aa).

An N6-(pyridoxal phosphate)lysine modification is found at Lys84.

The protein belongs to the TrpB family. Tetramer of two alpha and two beta chains. Pyridoxal 5'-phosphate is required as a cofactor.

It catalyses the reaction (1S,2R)-1-C-(indol-3-yl)glycerol 3-phosphate + L-serine = D-glyceraldehyde 3-phosphate + L-tryptophan + H2O. It functions in the pathway amino-acid biosynthesis; L-tryptophan biosynthesis; L-tryptophan from chorismate: step 5/5. In terms of biological role, the beta subunit is responsible for the synthesis of L-tryptophan from indole and L-serine. The polypeptide is Tryptophan synthase beta chain (Methanococcus aeolicus (strain ATCC BAA-1280 / DSM 17508 / OCM 812 / Nankai-3)).